We begin with the raw amino-acid sequence, 398 residues long: Lipase member N (398 aa).

Positions 1–18 (MMWLLLTTTCLICGTLNA) are cleaved as a signal peptide. The region spanning 79 to 379 (PVVYMQHALF…DWNHFDFVWG (301 aa)) is the AB hydrolase-1 domain. Residue Ser-173 is the Nucleophile of the active site. Cys-247 and Cys-256 form a disulfide bridge. The N-linked (GlcNAc...) asparagine glycan is linked to Asn-272. Catalysis depends on charge relay system residues Asp-344 and His-373.

Belongs to the AB hydrolase superfamily. Lipase family. Highly expressed in the epidermis in the granular keratinocytes. Also detected in other tissues, although at much lower levels, including lung and spleen.

It is found in the secreted. The enzyme catalyses a sterol ester + H2O = a sterol + a fatty acid + H(+). It catalyses the reaction a triacylglycerol + H2O = a 1,2-diacylglycerol + a fatty acid + H(+). It carries out the reaction a triacylglycerol + H2O = a diacylglycerol + a fatty acid + H(+). The catalysed reaction is a cholesterol ester + H2O = cholesterol + a fatty acid + H(+). In terms of biological role, plays a highly specific role in the last step of keratinocyte differentiation. Contains two distinct domains: the alpha/beta hydrolase fold and the abhydrolase-associated lipase region, also features the consensus sequence of the active site of a genuine lipase. May have an essential function in lipid metabolism of the most differentiated epidermal layers. This Homo sapiens (Human) protein is Lipase member N (LIPN).